The following is a 248-amino-acid chain: ATP synthase subunit a (248 aa).

A propeptide spans Met1 to Tyr3 (removed in mature form). Helical transmembrane passes span Met24 to Phe44, Ile86 to Leu106, Phe117 to Val137, Val146 to Leu166, Ile183 to Ile203, Leu205 to Val225, and Ile227 to Leu247.

This sequence belongs to the ATPase A chain family. In terms of assembly, F-type ATPases have 2 components, CF(1) - the catalytic core - and CF(0) - the membrane proton channel. CF(1) has five subunits: alpha(3), beta(3), gamma(1), delta(1), epsilon(1). CF(0) has three main subunits: a, b and c.

Its subcellular location is the mitochondrion inner membrane. Functionally, mitochondrial membrane ATP synthase (F(1)F(0) ATP synthase or Complex V) produces ATP from ADP in the presence of a proton gradient across the membrane which is generated by electron transport complexes of the respiratory chain. F-type ATPases consist of two structural domains, F(1) - containing the extramembraneous catalytic core and F(0) - containing the membrane proton channel, linked together by a central stalk and a peripheral stalk. During catalysis, ATP synthesis in the catalytic domain of F(1) is coupled via a rotary mechanism of the central stalk subunits to proton translocation. Key component of the proton channel; it may play a direct role in the translocation of protons across the membrane. In Zancudomyces culisetae (Gut fungus), this protein is ATP synthase subunit a.